A 239-amino-acid chain; its full sequence is Ribonuclease P protein component 3 (239 aa).

It belongs to the eukaryotic/archaeal RNase P protein component 3 family. In terms of assembly, consists of a catalytic RNA component and at least 4-5 protein subunits.

Its subcellular location is the cytoplasm. The enzyme catalyses Endonucleolytic cleavage of RNA, removing 5'-extranucleotides from tRNA precursor.. Part of ribonuclease P, a protein complex that generates mature tRNA molecules by cleaving their 5'-ends. The chain is Ribonuclease P protein component 3 from Methanosarcina barkeri (strain Fusaro / DSM 804).